Consider the following 930-residue polypeptide: Probable outer membrane protein pmp8 (930 aa).

A signal peptide spans 1–26 (MKIPLHKLLISSTLVTPILLSIATYG). Residues 636-930 (SIYQQRGLWA…NVDCGLRYSF (295 aa)) form the Autotransporter domain.

It belongs to the PMP outer membrane protein family.

The protein localises to the secreted. It localises to the cell wall. The protein resides in the cell outer membrane. This chain is Probable outer membrane protein pmp8 (pmp8), found in Chlamydia pneumoniae (Chlamydophila pneumoniae).